An 80-amino-acid chain; its full sequence is Acyl carrier protein (80 aa).

One can recognise a Carrier domain in the interval 1–79 (MSQEEILQKV…DAVKFIEAKK (79 aa)). Ser39 bears the O-(pantetheine 4'-phosphoryl)serine mark.

Belongs to the acyl carrier protein (ACP) family. Post-translationally, 4'-phosphopantetheine is transferred from CoA to a specific serine of apo-ACP by AcpS. This modification is essential for activity because fatty acids are bound in thioester linkage to the sulfhydryl of the prosthetic group.

Its subcellular location is the cytoplasm. It participates in lipid metabolism; fatty acid biosynthesis. Its function is as follows. Carrier of the growing fatty acid chain in fatty acid biosynthesis. The chain is Acyl carrier protein from Prochlorococcus marinus (strain MIT 9515).